Reading from the N-terminus, the 588-residue chain is Adenine deaminase (588 aa).

Belongs to the metallo-dependent hydrolases superfamily. Adenine deaminase family. In terms of assembly, homodimer. The cofactor is Mn(2+).

It carries out the reaction adenine + H2O + H(+) = hypoxanthine + NH4(+). This chain is Adenine deaminase, found in Shigella flexneri serotype 5b (strain 8401).